The sequence spans 1162 residues: MSFRIAGPRLLLLGLQLFAKAWSYNLDTRPTQSFLAQAGRHFGYQVLQIEDGVVVGAPGEGDNTGGLYHCRTSSEFCQPVSLHGSNHTSKYLGMTLATDAAKGSLLACDPGLSRTCDQNTYLSGLCYLFPQSLEGPMLQNRPAYQECMKGKVDLVFLFDGSQSLDRKDFEKILEFMKDVMRKLSNTSYQFAAVQFSTDCRTEFTFLDYVKQNKNPDVLLGSVQPMFLLTNTFRAINYVVAHVFKEESGARPDATKVLVIITDGEASDKGNISAAHDITRYIIGIGKHFVSVQKQKTLHIFASEPVEEFVKILDTFEKLKDLFTDLQRRIYAIEGTNRQDLTSFNMELSSSGISADLSKGHAVVGAVGAKDWAGGFLDLREDLQGATFVGQEPLTSDVRGGYLGYTVAWMTSRSSRPLLAAGAPRYQHVGQVLLFQAPEAGGRWNQTQKIEGTQIGSYFGGELCSVDLDQDGEAELLLIGAPLFFGEQRGGRVFTYQRRQSLFEMVSELQGDPGYPLGRFGAAITALTDINGDRLTDVAVGAPLEEQGAVYIFNGKPGGLSPQPSQRIQGAQVFPGIRWFGRSIHGVKDLGGDRLADVVVGAEGRVVVLSSRPVVDVVTELSFSPEEIPVHEVECSYSAREEQKHGVKLKACFRIKPLTPQFQGRLLANLSYTLQLDGHRMRSRGLFPDGSHELSGNTSITPDKSCLDFHFHFPICIQDLISPINVSLNFSLLEEEGTPRDQKVGRAMQPILRPSIHTVTKEIPFEKNCGEDKKCEANLTLSSPARSGPLRLMSSASLAVEWTLSNSGEDAYWVRLDLDFPRGLSFRKVEMLQPHSRMPVSCEELTEGSSLLTKTLKCNVSSPIFKAGQEVSLQVMFNTLLNSSWEDFVELNGTVHCENENSSLQEDNSAATHIPVLYPVNILTKEQENSTLYISFTPKGPKTQQVQHVYQVRIQPSAYDHNMPTLEALVGVPWPHSEDPITYTWSVQTDPLVTCHSEDLKRPSSEAEQPCLPGVQFRCPIVFRREILIQVTGTVELSKEIKASSTLSLCSSLSVSFNSSKHFHLYGSKASEAQVLVKVDLIHEKEMLHVYVLSGIGGLVLLFLIFLALYKVGFFKRNLKEKMEADGGVPNGSPPEDTDPLAVPGEETKDMGCLEPLRESDKD.

Residues 1–23 (MSFRIAGPRLLLLGLQLFAKAWS) form the signal peptide. The Extracellular segment spans residues 24 to 1088 (YNLDTRPTQS…DLIHEKEMLH (1065 aa)). FG-GAP repeat units follow at residues 28 to 79 (TRPT…FCQP) and 80 to 138 (VSLH…GPML). A disulfide bridge links Cys-70 with Cys-77. Asn-86 carries an N-linked (GlcNAc...) asparagine glycan. Cystine bridges form between Cys-108–Cys-126 and Cys-147–Cys-199. Residues 153–325 (DLVFLFDGSQ…EKLKDLFTDL (173 aa)) enclose the VWFA domain. Asn-185 and Asn-270 each carry an N-linked (GlcNAc...) asparagine glycan. FG-GAP repeat units lie at residues 336 to 387 (NRQD…GATF), 390 to 443 (QEPL…GGRW), 444 to 504 (NQTQ…LFEM), 505 to 561 (VSEL…GLSP), and 565 to 625 (QRIQ…FSPE). Asn-444 carries N-linked (GlcNAc...) asparagine glycosylation. Residues Asp-466, Asp-468, Asp-470, Glu-474, Asp-528, Asn-530, Asp-532, Asp-536, Asp-588, Asp-592, and Asp-596 each coordinate Ca(2+). Cysteines 651 and 705 form a disulfide. N-linked (GlcNAc...) asparagine glycosylation is found at Asn-668, Asn-696, Asn-724, and Asn-728. A disulfide bond links Cys-768 and Cys-774. An N-linked (GlcNAc...) asparagine glycan is attached at Asn-777. Cysteines 841 and 857 form a disulfide. Asn-858, Asn-881, Asn-891, Asn-900, and Asn-928 each carry an N-linked (GlcNAc...) asparagine glycan. 2 disulfide bridges follow: Cys-994-Cys-1010 and Cys-1018-Cys-1049. An N-linked (GlcNAc...) asparagine glycan is attached at Asn-1057. A helical transmembrane segment spans residues 1089–1109 (VYVLSGIGGLVLLFLIFLALY). Over 1110-1162 (KVGFFKRNLKEKMEADGGVPNGSPPEDTDPLAVPGEETKDMGCLEPLRESDKD) the chain is Cytoplasmic. Residues 1112 to 1116 (GFFKR) carry the GFFKR motif motif. The interval 1124–1162 (ADGGVPNGSPPEDTDPLAVPGEETKDMGCLEPLRESDKD) is disordered. The span at 1145–1162 (EETKDMGCLEPLRESDKD) shows a compositional bias: basic and acidic residues.

Belongs to the integrin alpha chain family. In terms of assembly, heterodimer of an alpha and a beta subunit. The ITGAL alpha subunit associates with the ITGB2 beta subunit. Interacts with THBD. Interacts with CD226. In resting T-cells, up to 40% of surface ITGAL is constitutively phosphorylated. Phosphorylation causes conformational changes needed for ligand binding and is necessary for the activation by some physiological agents. In terms of tissue distribution, leukocytes.

It is found in the cell membrane. Its function is as follows. Integrin ITGAL/ITGB2 is a receptor for ICAM1, ICAM2, ICAM3 and ICAM4. Integrin ITGAL/ITGB2 is a receptor for F11R. Integrin ITGAL/ITGB2 is a receptor for the secreted form of ubiquitin-like protein ISG15; the interaction is mediated by ITGAL. Involved in a variety of immune phenomena including leukocyte-endothelial cell interaction, cytotoxic T-cell mediated killing, and antibody dependent killing by granulocytes and monocytes. Contributes to natural killer cell cytotoxicity. Involved in leukocyte adhesion and transmigration of leukocytes including T-cells and neutrophils. Acts as a platform at the immunological synapse to translate TCR engagement and density of the ITGAL ligand ICAM1 into graded adhesion. Required for generation of common lymphoid progenitor cells in bone marrow, indicating the role in lymphopoiesis. Integrin ITGAL/ITGB2 in association with ICAM3, contributes to apoptotic neutrophil phagocytosis by macrophages. The chain is Integrin alpha-L from Mus musculus (Mouse).